We begin with the raw amino-acid sequence, 485 residues long: MNEILRKSYAELKSSLSLGKISATELATACIERIKEVDGSVKAFLSLDEKRILDAASESDARRKSGNPLSEFDGMPIAIKDNICIRDSITSCASKILENYKSPFHATVIEKLIAKGFVLIPRANMDEFAMGSSTENSAFQTTRNPFDLERIPGGSSGGSAAAVAASMVPLALGSDTGGSVRQPASLCGLYGLKPTYGTVSRYGLVAYASSLDQIGPFSKELQGCIDLYSVISGKDERDSTSLNHPGFSAPWTPDFKGLKIGTIKMTSEIQPEVVKAYEKVLNQLKEKGATLVELDFSKFDFAIPIYYIIATAECSSNLSRFDGIRFGSRKDKTGKLEDLFVDSRTTGFGSEVKRRILLGTFSLSAGYYDAYYGTAQKARVLIRKEYDSFFSKVDFILQPTSPTTAFKVGEKTKDPIQMYKADIWTTSVNLAGIPAISVPMGTDEKGLPIGLQITAPHFQEGKLFGAAQAIGALEDLNIKFPENIG.

Catalysis depends on charge relay system residues Lys-80 and Ser-155. Ser-179 (acyl-ester intermediate) is an active-site residue.

Belongs to the amidase family. GatA subfamily. As to quaternary structure, heterotrimer of A, B and C subunits.

It catalyses the reaction L-glutamyl-tRNA(Gln) + L-glutamine + ATP + H2O = L-glutaminyl-tRNA(Gln) + L-glutamate + ADP + phosphate + H(+). Functionally, allows the formation of correctly charged Gln-tRNA(Gln) through the transamidation of misacylated Glu-tRNA(Gln) in organisms which lack glutaminyl-tRNA synthetase. The reaction takes place in the presence of glutamine and ATP through an activated gamma-phospho-Glu-tRNA(Gln). The polypeptide is Glutamyl-tRNA(Gln) amidotransferase subunit A (Leptospira borgpetersenii serovar Hardjo-bovis (strain L550)).